A 245-amino-acid polypeptide reads, in one-letter code: Transmembrane protein 69 (245 aa).

The next 5 helical transmembrane spans lie at A97–I117, I122–G142, Y159–S179, A185–P205, and I216–Y236.

It localises to the membrane. In Mus musculus (Mouse), this protein is Transmembrane protein 69 (Tmem69).